Here is a 186-residue protein sequence, read N- to C-terminus: Elongation factor P (186 aa).

This sequence belongs to the elongation factor P family.

It localises to the cytoplasm. It participates in protein biosynthesis; polypeptide chain elongation. Its function is as follows. Involved in peptide bond synthesis. Stimulates efficient translation and peptide-bond synthesis on native or reconstituted 70S ribosomes in vitro. Probably functions indirectly by altering the affinity of the ribosome for aminoacyl-tRNA, thus increasing their reactivity as acceptors for peptidyl transferase. The chain is Elongation factor P from Shewanella baltica (strain OS223).